A 37-amino-acid chain; its full sequence is Large ribosomal subunit protein bL36c (37 aa).

The protein belongs to the bacterial ribosomal protein bL36 family.

The protein resides in the plastid. It localises to the chloroplast. This Nicotiana tomentosiformis (Tobacco) protein is Large ribosomal subunit protein bL36c.